A 374-amino-acid chain; its full sequence is Multicilin (374 aa).

Positions 164 to 212 (EQYWRDVADHNQKALGDALVENNQLQVSLTEKQEEIVSLKEKNIQLNEL) form a coiled coil. A disordered region spans residues 230–260 (RTKQNSGATQGRLPVKRSLEDFYPQSNEPDS). The interval 330–374 (TDLEDVSFRTSIKEHSTIRTLAFPQGNAFTIRTSGGGYKFRWVPN) is TIRT domain.

The protein belongs to the geminin family. In terms of assembly, component of the EDM complex, at least composed of e2f4, e2f5, mcidas and tfdp1. As to expression, expressed in multiciliate differentiating cells. Expression is lost by stage 26, when multiciliate cells in the skin are fully differentiated, but is then detected in the developing nephrostomes of the kidneys where multiciliate cells form at later stages.

It is found in the nucleus. Transcription regulator specifically required for multiciliate cell differentiation. Acts in a multiprotein complex containing E2F4 and E2F5 that binds and activates genes required for centriole biogenesis. Activates genes required for centriole assembly (plk4, cep152) and genes specifically required for motile cilia formation (foxj1). Also promotes the deuterosome pathway of centriole biogenesis by activating expression of ccdc67/deup1, but not its paralog cep63. This chain is Multicilin (mcidas), found in Xenopus laevis (African clawed frog).